A 338-amino-acid polypeptide reads, in one-letter code: MTDLTTPIRTPEDADAALRPKTLAEFVGQAAARENLRIFIEAAKARGDALDHVLFFGPPGLGKTTLAQIVARELGVGFRSTSGPVIAKAGDLAALLTNLEDGDVLFIDEIHRLSPAVEEILYPAMEDRALDIMIGEGPSARSVRIDLPQFTLVGATTRQGLLTTPLRDRFGIPVRLNFYTHAELEQVIGRAARLLGLAIAPDGALEIAKRSRGTPRIAGRLLRRVRDFAAVAGHAIVDARAADAALNRLEVDALGLDAMDRRYLTMIADIYRGGPVGVETLAAGLSEPRDTIEDVIEPYLLQIGLIARTARGRTLNASAWKHLGLNPPAGSQDGLFDK.

The segment at 1 to 179 (MTDLTTPIRT…FGIPVRLNFY (179 aa)) is large ATPase domain (RuvB-L). ATP is bound by residues Leu18, Arg19, Gly60, Lys63, Thr64, Thr65, Arg169, Tyr179, and Arg216. Residue Thr64 coordinates Mg(2+). The segment at 180–250 (THAELEQVIG…AADAALNRLE (71 aa)) is small ATPAse domain (RuvB-S). A head domain (RuvB-H) region spans residues 253-338 (ALGLDAMDRR…AGSQDGLFDK (86 aa)). DNA contacts are provided by Arg289, Arg308, and Arg313.

The protein belongs to the RuvB family. Homohexamer. Forms an RuvA(8)-RuvB(12)-Holliday junction (HJ) complex. HJ DNA is sandwiched between 2 RuvA tetramers; dsDNA enters through RuvA and exits via RuvB. An RuvB hexamer assembles on each DNA strand where it exits the tetramer. Each RuvB hexamer is contacted by two RuvA subunits (via domain III) on 2 adjacent RuvB subunits; this complex drives branch migration. In the full resolvosome a probable DNA-RuvA(4)-RuvB(12)-RuvC(2) complex forms which resolves the HJ.

It is found in the cytoplasm. The enzyme catalyses ATP + H2O = ADP + phosphate + H(+). In terms of biological role, the RuvA-RuvB-RuvC complex processes Holliday junction (HJ) DNA during genetic recombination and DNA repair, while the RuvA-RuvB complex plays an important role in the rescue of blocked DNA replication forks via replication fork reversal (RFR). RuvA specifically binds to HJ cruciform DNA, conferring on it an open structure. The RuvB hexamer acts as an ATP-dependent pump, pulling dsDNA into and through the RuvAB complex. RuvB forms 2 homohexamers on either side of HJ DNA bound by 1 or 2 RuvA tetramers; 4 subunits per hexamer contact DNA at a time. Coordinated motions by a converter formed by DNA-disengaged RuvB subunits stimulates ATP hydrolysis and nucleotide exchange. Immobilization of the converter enables RuvB to convert the ATP-contained energy into a lever motion, pulling 2 nucleotides of DNA out of the RuvA tetramer per ATP hydrolyzed, thus driving DNA branch migration. The RuvB motors rotate together with the DNA substrate, which together with the progressing nucleotide cycle form the mechanistic basis for DNA recombination by continuous HJ branch migration. Branch migration allows RuvC to scan DNA until it finds its consensus sequence, where it cleaves and resolves cruciform DNA. This chain is Holliday junction branch migration complex subunit RuvB, found in Sphingopyxis alaskensis (strain DSM 13593 / LMG 18877 / RB2256) (Sphingomonas alaskensis).